The sequence spans 179 residues: Large ribosomal subunit protein uL6 (179 aa).

The protein belongs to the universal ribosomal protein uL6 family. As to quaternary structure, part of the 50S ribosomal subunit.

This protein binds to the 23S rRNA, and is important in its secondary structure. It is located near the subunit interface in the base of the L7/L12 stalk, and near the tRNA binding site of the peptidyltransferase center. This Desulfovibrio desulfuricans (strain ATCC 27774 / DSM 6949 / MB) protein is Large ribosomal subunit protein uL6.